A 122-amino-acid chain; its full sequence is Large ribosomal subunit protein uL29B (122 aa).

Residues 10 to 69 (QLGIKQIEERAAEIKAELAALRQKKNSGDVGANDIKTAKKNLARALTVRREKILEELVEA) adopt a coiled-coil conformation.

The protein belongs to the universal ribosomal protein uL29 family. Component of the large ribosomal subunit.

The protein localises to the cytoplasm. In Encephalitozoon cuniculi (strain GB-M1) (Microsporidian parasite), this protein is Large ribosomal subunit protein uL29B (RPL35C).